Reading from the N-terminus, the 94-residue chain is uncharacterized protein (94 aa).

This is an uncharacterized protein from Bacillus subtilis (strain 168).